The sequence spans 255 residues: Imidazole glycerol phosphate synthase subunit HisF (255 aa).

Residues Asp11 and Asp130 contribute to the active site.

It belongs to the HisA/HisF family. As to quaternary structure, heterodimer of HisH and HisF.

It localises to the cytoplasm. It catalyses the reaction 5-[(5-phospho-1-deoxy-D-ribulos-1-ylimino)methylamino]-1-(5-phospho-beta-D-ribosyl)imidazole-4-carboxamide + L-glutamine = D-erythro-1-(imidazol-4-yl)glycerol 3-phosphate + 5-amino-1-(5-phospho-beta-D-ribosyl)imidazole-4-carboxamide + L-glutamate + H(+). The protein operates within amino-acid biosynthesis; L-histidine biosynthesis; L-histidine from 5-phospho-alpha-D-ribose 1-diphosphate: step 5/9. Its function is as follows. IGPS catalyzes the conversion of PRFAR and glutamine to IGP, AICAR and glutamate. The HisF subunit catalyzes the cyclization activity that produces IGP and AICAR from PRFAR using the ammonia provided by the HisH subunit. The protein is Imidazole glycerol phosphate synthase subunit HisF of Rhodopseudomonas palustris (strain HaA2).